The chain runs to 885 residues: Dipeptidyl peptidase 9 (885 aa).

Catalysis depends on charge relay system residues Ser752, Asp830, and His862. Ser752 contacts Val-boroPro.

This sequence belongs to the peptidase S9B family. DPPIV subfamily. In terms of assembly, homodimer. Forms a ternary complex with NLRP1, composed of a DPP9 homodimer, one full-length NLRP1 protein, and one cleaved C-terminus of NLRP1 (NACHT, LRR and PYD domains-containing protein 1, C-terminus).

The protein resides in the nucleus. The enzyme catalyses Release of an N-terminal dipeptide, Xaa-Yaa-|-Zaa-, from a polypeptide, preferentially when Yaa is Pro, provided Zaa is neither Pro nor hydroxyproline.. In terms of biological role, dipeptidyl peptidase that cleaves off N-terminal dipeptides from proteins having a Pro or Ala residue at position 2. Acts as a key inhibitor of the NLRP1 inflammasome. The protein is Dipeptidyl peptidase 9 of Danio rerio (Zebrafish).